Consider the following 273-residue polypeptide: Putative phosphoenolpyruvate synthase regulatory protein (273 aa).

Residue 153–160 (GVSRSGKT) participates in ADP binding.

The protein belongs to the pyruvate, phosphate/water dikinase regulatory protein family. PSRP subfamily.

The catalysed reaction is [pyruvate, water dikinase] + ADP = [pyruvate, water dikinase]-phosphate + AMP + H(+). It catalyses the reaction [pyruvate, water dikinase]-phosphate + phosphate + H(+) = [pyruvate, water dikinase] + diphosphate. Bifunctional serine/threonine kinase and phosphorylase involved in the regulation of the phosphoenolpyruvate synthase (PEPS) by catalyzing its phosphorylation/dephosphorylation. The chain is Putative phosphoenolpyruvate synthase regulatory protein from Polaromonas naphthalenivorans (strain CJ2).